The following is a 249-amino-acid chain: ATP synthase subunit a (249 aa).

The next 6 membrane-spanning stretches (helical) occupy residues 30 to 50 (QSPL…YVGM), 86 to 106 (FFPF…LGLL), 115 to 135 (HIAV…LASI), 146 to 166 (FLPA…EIIS), 191 to 211 (VFAG…VLAI), and 218 to 238 (IALT…FAIL).

This sequence belongs to the ATPase A chain family. F-type ATPases have 2 components, CF(1) - the catalytic core - and CF(0) - the membrane proton channel. CF(1) has five subunits: alpha(3), beta(3), gamma(1), delta(1), epsilon(1). CF(0) has three main subunits: a(1), b(2) and c(9-12). The alpha and beta chains form an alternating ring which encloses part of the gamma chain. CF(1) is attached to CF(0) by a central stalk formed by the gamma and epsilon chains, while a peripheral stalk is formed by the delta and b chains.

Its subcellular location is the cell inner membrane. Key component of the proton channel; it plays a direct role in the translocation of protons across the membrane. This Gluconobacter oxydans (strain 621H) (Gluconobacter suboxydans) protein is ATP synthase subunit a.